Consider the following 220-residue polypeptide: Ribose-5-phosphate isomerase A (220 aa).

Substrate contacts are provided by residues 25-28, 80-83, and 93-96; these read TGST, DGAD, and KGGG. Glutamate 102 functions as the Proton acceptor in the catalytic mechanism. Lysine 120 lines the substrate pocket.

It belongs to the ribose 5-phosphate isomerase family. As to quaternary structure, homodimer.

It catalyses the reaction aldehydo-D-ribose 5-phosphate = D-ribulose 5-phosphate. It functions in the pathway carbohydrate degradation; pentose phosphate pathway; D-ribose 5-phosphate from D-ribulose 5-phosphate (non-oxidative stage): step 1/1. Catalyzes the reversible conversion of ribose-5-phosphate to ribulose 5-phosphate. The chain is Ribose-5-phosphate isomerase A from Bacillus cereus (strain ATCC 10987 / NRS 248).